The sequence spans 77 residues: Translation initiation factor IF-1, chloroplastic (77 aa).

Residues 1 to 71 (MKEQKLIHEG…TRGRIIYRLR (71 aa)) enclose the S1-like domain.

It belongs to the IF-1 family. In terms of assembly, component of the 30S ribosomal translation pre-initiation complex which assembles on the 30S ribosome in the order IF-2 and IF-3, IF-1 and N-formylmethionyl-tRNA(fMet); mRNA recruitment can occur at any time during PIC assembly.

It localises to the plastid. The protein resides in the chloroplast. In terms of biological role, one of the essential components for the initiation of protein synthesis. Stabilizes the binding of IF-2 and IF-3 on the 30S subunit to which N-formylmethionyl-tRNA(fMet) subsequently binds. Helps modulate mRNA selection, yielding the 30S pre-initiation complex (PIC). Upon addition of the 50S ribosomal subunit IF-1, IF-2 and IF-3 are released leaving the mature 70S translation initiation complex. The sequence is that of Translation initiation factor IF-1, chloroplastic from Acorus calamus var. americanus (American sweet flag).